The sequence spans 161 residues: Allophycocyanin alpha chain (161 aa).

Position 71 is an N4-methylasparagine (asparagine 71). Residue cysteine 81 coordinates (2R,3E)-phycocyanobilin.

It belongs to the phycobiliprotein family. As to quaternary structure, heterodimer of an alpha and a beta chain. Contains one covalently linked phycocyanobilin chromophore.

The protein localises to the cellular thylakoid membrane. Its function is as follows. Light-harvesting photosynthetic bile pigment-protein from the phycobiliprotein complex. Allophycocyanin has a maximum absorption at approximately 650 nanometers. This Thermosynechococcus vestitus (strain NIES-2133 / IAM M-273 / BP-1) protein is Allophycocyanin alpha chain (apcA).